Reading from the N-terminus, the 1345-residue chain is Vascular endothelial growth factor receptor 2 (1345 aa).

The N-terminal stretch at 1–19 (MESKALLAVALWFCVETRA) is a signal peptide. Residues 20 to 762 (ASVGLPGDFL…EGAQEKTNLE (743 aa)) lie on the Extracellular side of the membrane. N-linked (GlcNAc...) asparagine glycosylation is found at Asn-46, Asn-98, Asn-145, Asn-160, and Asn-247. Ig-like C2-type domains lie at 46-111 (NTTL…RDVD), 143-209 (NKNK…INDE), 226-325 (YDVI…TFVR), 330-416 (PFIA…HMVS), 423-542 (PQIG…RVIS), 549-656 (PEIT…LVKQ), and 665-751 (PMIT…TLFI). A disulfide bridge connects residues Cys-53 and Cys-105. A disulfide bond links Cys-152 and Cys-202. Cys-248 and Cys-309 are oxidised to a cystine. N-linked (GlcNAc...) asparagine glycosylation is found at Asn-320, Asn-376, Asn-397, Asn-509, Asn-521, Asn-578, Asn-611, Asn-617, Asn-629, Asn-673, Asn-702, and Asn-719. Intrachain disulfides connect Cys-447–Cys-528 and Cys-569–Cys-640. A disulfide bond links Cys-686 and Cys-735. Residues 763-783 (VIILVGTAVIAMFFWLLLVIV) form a helical membrane-spanning segment. The Cytoplasmic portion of the chain corresponds to 784–1345 (LRTVKRANEG…SGTTLRSPPV (562 aa)). Tyr-799 carries the phosphotyrosine modification. The region spanning 832 to 1160 (LKLGKPLGRG…FSELVEHLGN (329 aa)) is the Protein kinase domain. ATP contacts are provided by residues 838–846 (LGRGAFGQV) and Lys-866. Phosphotyrosine; by autocatalysis is present on Tyr-949. Ser-980 and Ser-982 each carry phosphoserine. Residue Tyr-994 is modified to Phosphotyrosine; by autocatalysis. An intrachain disulfide couples Cys-1022 to Cys-1043. Residue Asp-1026 is the Proton acceptor of the active site. Tyr-1052, Tyr-1057, Tyr-1173, and Tyr-1212 each carry phosphotyrosine; by autocatalysis. Residues Ser-1229 and Ser-1233 each carry the phosphoserine modification. Position 1236 is a phosphothreonine (Thr-1236). The segment at 1272 to 1316 (DRNKLSPSFGGMMPSKSRESVASEGSNQTSGYQSGYHSDDTDTTV) is disordered. Positions 1294-1307 (SEGSNQTSGYQSGY) are enriched in polar residues. 3 positions are modified to phosphotyrosine; by autocatalysis: Tyr-1303, Tyr-1307, and Tyr-1317.

It belongs to the protein kinase superfamily. Tyr protein kinase family. CSF-1/PDGF receptor subfamily. As to quaternary structure, homodimer in the presence of bound dimeric VEGFA, VEGFC or VEGFD ligands; monomeric in the absence of bound ligands. Can also form heterodimers with FLT1/VEGFR1 and KDR/VEGFR2. Interacts (tyrosine phosphorylated) with LFYN, NCK1, PLCG1. Interacts (tyrosine-phosphorylated active form preferentially) with DAB2IP (via C2 domain and active form preferentially); the interaction occurs at the late phase of VEGFA response and inhibits KDR/VEGFR2 activity. Interacts with SHBSH2D2A/TSAD, GRB2, MYOF, CBL and PDCD6. Interacts (via C-terminus domain) with ERN1 (via kinase domain); the interaction is facilitated in a XBP1 isoform 1- and vascular endothelial growth factor (VEGF)-dependent manner in endothelial cells. Interacts (via juxtamembrane region) with chaperone PDCL3 (via thioredoxin fold region); the interaction leads to increased KDR/VEGFR2 abundance through inhibition of its ubiquitination and degradation. Interacts (tyrosine phosphorylated) with CCDC88A/GIV (via SH2-like region); binding requires autophosphorylation of the KDR/VEGFR2 C-terminal region. Interacts with isoform 2 of BSG. Interacts with SLC31A1; this interaction is induced upon VEGFA stimulation leading to SLC31A1 and KDR subsequent co-internalization to early endosomes, thereby activating KDR downstream signaling in endothelial cells. N-glycosylated. Post-translationally, ubiquitinated. Tyrosine phosphorylation of the receptor promotes its poly-ubiquitination, leading to its degradation via the proteasome or lysosomal proteases. In terms of processing, autophosphorylated on tyrosine residues upon ligand binding. Autophosphorylation occurs in trans, i.e. one subunit of the dimeric receptor phosphorylates tyrosine residues on the other subunit. Phosphorylation at Tyr-949 is important for interaction with SH2D2A/TSAD and VEGFA-mediated reorganization of the actin cytoskeleton. Phosphorylation at Tyr-1173 is important for interaction with PLCG1 and SHB. Phosphorylation at Tyr-1212 is important for interaction with NCK1 and FYN. Dephosphorylated by PTPRJ at Tyr-799, Tyr-949, Tyr-994, Tyr-1052, Tyr-1057, Tyr-1173 and Tyr-1212. The inhibitory disulfide bond between Cys-1022 and Cys-1043 may serve as a specific molecular switch for H(2)S-induced modification that regulates KDR/VEGFR2 function. As to expression, expressed in endothelial cells (at protein level). Detected in embryonic endothelial cells, as well as hematopoietic stem and progenitor cells. Detected in vascular endothelium. Expressed at high levels in adult heart, lung, kidney, brain and skeletal muscle, but is also expressed at lower levels in most other adult tissues.

The protein resides in the cell junction. It is found in the endoplasmic reticulum. The protein localises to the cell membrane. It localises to the cytoplasm. Its subcellular location is the nucleus. The protein resides in the cytoplasmic vesicle. It is found in the early endosome. The protein localises to the secreted. The catalysed reaction is L-tyrosyl-[protein] + ATP = O-phospho-L-tyrosyl-[protein] + ADP + H(+). With respect to regulation, present in an inactive conformation in the absence of bound ligand. Binding of VEGFA, VEGFC or VEGFD leads to dimerization and activation by autophosphorylation on tyrosine residues. May be regulated by hydrogen sulfide (H(2)S) levels via a sensitive intracellular disulfide bond. In terms of biological role, tyrosine-protein kinase that acts as a cell-surface receptor for VEGFA, VEGFC and VEGFD. Plays an essential role in the regulation of angiogenesis, vascular development, vascular permeability, and embryonic hematopoiesis. Promotes proliferation, survival, migration and differentiation of endothelial cells. Promotes reorganization of the actin cytoskeleton. Isoforms lacking a transmembrane domain, such as isoform 2, may function as decoy receptors for VEGFA, VEGFC and/or VEGFD. Isoform 2 plays an important role as a negative regulator of VEGFA- and VEGFC-mediated lymphangiogenesis by limiting the amount of free VEGFA and/or VEGFC and by preventing their binding to FLT4. Modulates FLT1 and FLT4 signaling by forming heterodimers. Binding of vascular growth factors to isoform 1 leads to the activation of several signaling cascades. Activation of PLCG1 leads to the production of the cellular signaling molecules diacylglycerol and inositol 1,4,5-trisphosphate and the activation of protein kinase C. Mediates activation of MAPK1/ERK2, MAPK3/ERK1 and the MAP kinase signaling pathway, as well as of the AKT1 signaling pathway. Mediates phosphorylation of PIK3R1, the regulatory subunit of phosphatidylinositol 3-kinase, reorganization of the actin cytoskeleton and activation of PTK2/FAK1. Required for VEGFA-mediated induction of NOS2 and NOS3, leading to the production of the signaling molecule nitric oxide (NO) by endothelial cells. Phosphorylates PLCG1. Promotes phosphorylation of FYN, NCK1, NOS3, PIK3R1, PTK2/FAK1 and SRC. The chain is Vascular endothelial growth factor receptor 2 from Mus musculus (Mouse).